The sequence spans 166 residues: Interferon gamma (166 aa).

The signal sequence occupies residues 1 to 23; it reads MSYTTYFLAFQLCVTLCFSGSYC. Gln-24 is modified (pyrrolidone carboxylic acid). N-linked (GlcNAc...) asparagine glycosylation is found at Asn-39 and Asn-106.

This sequence belongs to the type II (or gamma) interferon family. In terms of assembly, homodimer. Interacts with IFNGR1 (via extracellular domain); this interaction promotes IFNGR1 dimerization. As to expression, released primarily from activated T lymphocytes.

The protein resides in the secreted. Type II interferon produced by immune cells such as T-cells and NK cells that plays crucial roles in antimicrobial, antiviral, and antitumor responses by activating effector immune cells and enhancing antigen presentation. Primarily signals through the JAK-STAT pathway after interaction with its receptor IFNGR1 to affect gene regulation. Upon IFNG binding, IFNGR1 intracellular domain opens out to allow association of downstream signaling components JAK2, JAK1 and STAT1, leading to STAT1 activation, nuclear translocation and transcription of IFNG-regulated genes. Many of the induced genes are transcription factors such as IRF1 that are able to further drive regulation of a next wave of transcription. Plays a role in class I antigen presentation pathway by inducing a replacement of catalytic proteasome subunits with immunoproteasome subunits. In turn, increases the quantity, quality, and repertoire of peptides for class I MHC loading. Increases the efficiency of peptide generation also by inducing the expression of activator PA28 that associates with the proteasome and alters its proteolytic cleavage preference. Up-regulates as well MHC II complexes on the cell surface by promoting expression of several key molecules such as cathepsins B/CTSB, H/CTSH, and L/CTSL. Participates in the regulation of hematopoietic stem cells during development and under homeostatic conditions by affecting their development, quiescence, and differentiation. This Sus scrofa (Pig) protein is Interferon gamma (IFNG).